The chain runs to 130 residues: Putative pre-16S rRNA nuclease (130 aa).

It belongs to the YqgF nuclease family.

The protein resides in the cytoplasm. Could be a nuclease involved in processing of the 5'-end of pre-16S rRNA. In Sulfurimonas denitrificans (strain ATCC 33889 / DSM 1251) (Thiomicrospira denitrificans (strain ATCC 33889 / DSM 1251)), this protein is Putative pre-16S rRNA nuclease.